Here is a 103-residue protein sequence, read N- to C-terminus: SOSS complex subunit C (103 aa).

This sequence belongs to the SOSS-C family. As to quaternary structure, belongs to the multiprotein complex Integrator. Component of the SOSS complex, composed of SOSS-B (SOSS-B1/NABP2 or SOSS-B2/NABP1), SOSS-A/INTS3 and SOSS-C/INIP.

Its subcellular location is the nucleus. Its function is as follows. Component of the SOSS complex, a multiprotein complex that functions downstream of the MRN complex to promote DNA repair and G2/M checkpoint. The SOSS complex associates with single-stranded DNA at DNA lesions and influences diverse endpoints in the cellular DNA damage response including cell-cycle checkpoint activation, recombinational repair and maintenance of genomic stability. Required for efficient homologous recombination-dependent repair of double-strand breaks (DSBs). This Gallus gallus (Chicken) protein is SOSS complex subunit C (INIP).